A 412-amino-acid polypeptide reads, in one-letter code: MTNYRVESSSGRAARKTRLALMGPAFIAAIGYIDPGNFATNIQAGASFGYQLLWVVVWANLMAMLIQILSAKLGIATGKNLAEQIRDHYPRPVVWFYWVQAEIIAMATDLAEFIGAAIGFKLILGVSLLQGAVLTGIATFLILMLQRRGQKPLEKVIGGLLLFVAAAYIVELIFSQPNLAQLGKGMVIPSLPTSEAVFLAAGVLGATIMPHVIYLHSSLTQHLHGGSRQQRYSATKWDVAIAMTIAGFVNLAMMATAAAAFHFSGHTGVADLDEAYLTLQPLLSHAAATVFGLSLVAAGLSSTVVGTLAGQVVMQGFIRFHIPLWVRRTVTMLPSFIVILMGLDPTRILVMSQVLLSFGIALALVPLLIFTSDSKLMGDLVNSKRVKQTGWVIVVLVVALNIWLLVGTALGL.

Over 1 to 19 the chain is Cytoplasmic; that stretch reads MTNYRVESSSGRAARKTRL. A helical transmembrane segment spans residues 20–39; it reads ALMGPAFIAAIGYIDPGNFA. Over 40 to 51 the chain is Periplasmic; sequence TNIQAGASFGYQ. Residues 52 to 71 traverse the membrane as a helical segment; the sequence is LLWVVVWANLMAMLIQILSA. Residues 72–95 are Cytoplasmic-facing; it reads KLGIATGKNLAEQIRDHYPRPVVW. Residues 96–118 traverse the membrane as a helical segment; it reads FYWVQAEIIAMATDLAEFIGAAI. Residues 119-125 are Periplasmic-facing; the sequence is GFKLILG. A helical transmembrane segment spans residues 126-145; it reads VSLLQGAVLTGIATFLILML. The Cytoplasmic portion of the chain corresponds to 146–155; the sequence is QRRGQKPLEK. The chain crosses the membrane as a helical span at residues 156-175; the sequence is VIGGLLLFVAAAYIVELIFS. The Periplasmic portion of the chain corresponds to 176–196; the sequence is QPNLAQLGKGMVIPSLPTSEA. The helical transmembrane segment at 197–220 threads the bilayer; that stretch reads VFLAAGVLGATIMPHVIYLHSSLT. Residues 221-238 lie on the Cytoplasmic side of the membrane; that stretch reads QHLHGGSRQQRYSATKWD. The helical transmembrane segment at 239-258 threads the bilayer; sequence VAIAMTIAGFVNLAMMATAA. Over 259-276 the chain is Periplasmic; sequence AAFHFSGHTGVADLDEAY. A helical transmembrane segment spans residues 277-297; sequence LTLQPLLSHAAATVFGLSLVA. The Cytoplasmic portion of the chain corresponds to 298 to 327; that stretch reads AGLSSTVVGTLAGQVVMQGFIRFHIPLWVR. The chain crosses the membrane as a helical span at residues 328–344; it reads RTVTMLPSFIVILMGLD. Topologically, residues 345-350 are periplasmic; that stretch reads PTRILV. A helical transmembrane segment spans residues 351-370; it reads MSQVLLSFGIALALVPLLIF. Residues 371–387 are Cytoplasmic-facing; it reads TSDSKLMGDLVNSKRVK. A helical membrane pass occupies residues 388–406; that stretch reads QTGWVIVVLVVALNIWLLV. Over 407-412 the chain is Periplasmic; that stretch reads GTALGL.

The protein belongs to the NRAMP family.

The protein localises to the cell inner membrane. H(+)-stimulated, divalent metal cation uptake system. The protein is Divalent metal cation transporter MntH of Escherichia coli O9:H4 (strain HS).